Consider the following 326-residue polypeptide: N-(2-amino-2-carboxyethyl)-L-glutamate synthase (326 aa).

Position 47 is an N6-(pyridoxal phosphate)lysine (Lys47). Pyridoxal 5'-phosphate-binding positions include Asn77, 185–189 (STTGS), and Ser272.

It belongs to the cysteine synthase/cystathionine beta-synthase family. SbnA subfamily. Homodimer. Pyridoxal 5'-phosphate is required as a cofactor.

It carries out the reaction O-phospho-L-serine + L-glutamate = N-[(2S)-2-amino-2-carboxyethyl]-L-glutamate + phosphate + H(+). Its pathway is siderophore biosynthesis. In terms of biological role, catalyzes the synthesis of N-((2S)-2-amino-2-carboxyethyl)-L-glutamate (ACEGA) from O-phospho-L-serine and L-glutamate. Involved in the biosynthesis of L-2,3-diaminopropionic acid (L-Dap), a precursor of staphyloferrin B and antibiotics. This Staphylococcus aureus (strain bovine RF122 / ET3-1) protein is N-(2-amino-2-carboxyethyl)-L-glutamate synthase (sbnA).